Here is a 529-residue protein sequence, read N- to C-terminus: Peptide chain release factor 3 (529 aa).

The tr-type G domain occupies 11–280; it reads AKRRTFAIIS…GLVEWAPAPM (270 aa). GTP-binding positions include 20 to 27, 88 to 92, and 142 to 145; these read SHPDAGKT, DTPGH, and NKLD.

The protein belongs to the TRAFAC class translation factor GTPase superfamily. Classic translation factor GTPase family. PrfC subfamily.

Its subcellular location is the cytoplasm. Increases the formation of ribosomal termination complexes and stimulates activities of RF-1 and RF-2. It binds guanine nucleotides and has strong preference for UGA stop codons. It may interact directly with the ribosome. The stimulation of RF-1 and RF-2 is significantly reduced by GTP and GDP, but not by GMP. The polypeptide is Peptide chain release factor 3 (Yersinia pestis bv. Antiqua (strain Antiqua)).